We begin with the raw amino-acid sequence, 530 residues long: Bifunctional purine biosynthesis protein PurH (530 aa).

In terms of domain architecture, MGS-like spans 1–148 (MNNARPIRRA…KNHKDVTIVV (148 aa)).

This sequence belongs to the PurH family.

It catalyses the reaction (6R)-10-formyltetrahydrofolate + 5-amino-1-(5-phospho-beta-D-ribosyl)imidazole-4-carboxamide = 5-formamido-1-(5-phospho-D-ribosyl)imidazole-4-carboxamide + (6S)-5,6,7,8-tetrahydrofolate. The catalysed reaction is IMP + H2O = 5-formamido-1-(5-phospho-D-ribosyl)imidazole-4-carboxamide. Its pathway is purine metabolism; IMP biosynthesis via de novo pathway; 5-formamido-1-(5-phospho-D-ribosyl)imidazole-4-carboxamide from 5-amino-1-(5-phospho-D-ribosyl)imidazole-4-carboxamide (10-formyl THF route): step 1/1. It participates in purine metabolism; IMP biosynthesis via de novo pathway; IMP from 5-formamido-1-(5-phospho-D-ribosyl)imidazole-4-carboxamide: step 1/1. This is Bifunctional purine biosynthesis protein PurH from Vibrio campbellii (strain ATCC BAA-1116).